Reading from the N-terminus, the 239-residue chain is Geranylgeranylglyceryl phosphate synthase (239 aa).

The Mg(2+) site is built by aspartate 18 and serine 45. Sn-glycerol 1-phosphate is bound by residues 166 to 172, 197 to 198, and 219 to 220; these read YLEAGSG, GG, and GT.

Belongs to the GGGP/HepGP synthase family. Group II subfamily. Requires Mg(2+) as cofactor.

It localises to the cytoplasm. The enzyme catalyses sn-glycerol 1-phosphate + (2E,6E,10E)-geranylgeranyl diphosphate = sn-3-O-(geranylgeranyl)glycerol 1-phosphate + diphosphate. It participates in membrane lipid metabolism; glycerophospholipid metabolism. Its function is as follows. Prenyltransferase that catalyzes the transfer of the geranylgeranyl moiety of geranylgeranyl diphosphate (GGPP) to the C3 hydroxyl of sn-glycerol-1-phosphate (G1P). This reaction is the first ether-bond-formation step in the biosynthesis of archaeal membrane lipids. The chain is Geranylgeranylglyceryl phosphate synthase from Pyrobaculum arsenaticum (strain DSM 13514 / JCM 11321 / PZ6).